A 396-amino-acid chain; its full sequence is Purine ribonucleoside efflux pump NepI (396 aa).

Residues 1–21 (MSEFIAENRGADAITRPNWSA) lie on the Cytoplasmic side of the membrane. A helical transmembrane segment spans residues 22 to 42 (VFSVAFCVACLIIVEFLPVSL). The Periplasmic segment spans residues 43–54 (LTPMAQDLGISE). A helical transmembrane segment spans residues 55–75 (GVAGQSVTVTAFVAMFASLFI). The Cytoplasmic segment spans residues 76 to 85 (TQTIQATDRR). The chain crosses the membrane as a helical span at residues 86-106 (YVVILFAVLLTLSCLLVSFAN). Ser-107 is a topological domain (periplasmic). A helical membrane pass occupies residues 108–128 (FSLLLIGRACLGLALGGFWAI). The Cytoplasmic portion of the chain corresponds to 129–147 (SASLTMRLVPPRTVPKALS). Residues 148-168 (VIFGAVSIALVIAAPLGGFLG) form a helical membrane-spanning segment. The Periplasmic segment spans residues 169–175 (ELIGWRN). The chain crosses the membrane as a helical span at residues 176–196 (VFNAAAAMGVLCIFWIIKSLP). Topologically, residues 197–215 (SLPGEPSHQKQNTFRLLQR) are cytoplasmic. The helical transmembrane segment at 216–236 (PGVMAGMIAIFMSFAGQFAFF) threads the bilayer. At 237 to 255 (TYIRPVYMNLAGFGVDGLT) the chain is on the periplasmic side. Residues 256–276 (LVLLSFGIASFVGTSLSSFIL) traverse the membrane as a helical segment. Over 277-281 (KRSVK) the chain is Cytoplasmic. Residues 282–302 (LALAGAPFVLALSALVLTLWG) traverse the membrane as a helical segment. The Periplasmic segment spans residues 303-305 (SDK). A helical membrane pass occupies residues 306–326 (IVATGVAIIWGLTFALIPVGW). Residues 327–343 (STWITRSLADQAEKAGS) lie on the Cytoplasmic side of the membrane. The chain crosses the membrane as a helical span at residues 344 to 364 (IQVAVIQLANTCGAAIGGYAL). Residues 365–366 (DN) are Periplasmic-facing. The helical transmembrane segment at 367–387 (IGLTSPLMLSGTLMLLTALLV) threads the bilayer. Residues 388–396 (TAKVKMKKS) are Cytoplasmic-facing.

This sequence belongs to the major facilitator superfamily. DHA1 family. NepI (TC 2.A.1.2.26) subfamily.

Its subcellular location is the cell inner membrane. The catalysed reaction is inosine(in) + H(+)(out) = inosine(out) + H(+)(in). It catalyses the reaction guanosine(in) + H(+)(out) = guanosine(out) + H(+)(in). Functionally, involved in the efflux of purine ribonucleosides, such as inosine and guanosine. This is Purine ribonucleoside efflux pump NepI from Escherichia coli O127:H6 (strain E2348/69 / EPEC).